The primary structure comprises 169 residues: Ribosome maturation factor RimM (169 aa).

The PRC barrel domain maps to 94–166 (EEGFYDHELE…TATITPPDGL (73 aa)).

Belongs to the RimM family. Binds ribosomal protein uS19.

It is found in the cytoplasm. Functionally, an accessory protein needed during the final step in the assembly of 30S ribosomal subunit, possibly for assembly of the head region. Essential for efficient processing of 16S rRNA. May be needed both before and after RbfA during the maturation of 16S rRNA. It has affinity for free ribosomal 30S subunits but not for 70S ribosomes. The polypeptide is Ribosome maturation factor RimM (Corynebacterium efficiens (strain DSM 44549 / YS-314 / AJ 12310 / JCM 11189 / NBRC 100395)).